A 317-amino-acid chain; its full sequence is Glycine--tRNA ligase alpha subunit (317 aa).

The protein belongs to the class-II aminoacyl-tRNA synthetase family. Tetramer of two alpha and two beta subunits.

The protein localises to the cytoplasm. The enzyme catalyses tRNA(Gly) + glycine + ATP = glycyl-tRNA(Gly) + AMP + diphosphate. This Acidovorax ebreus (strain TPSY) (Diaphorobacter sp. (strain TPSY)) protein is Glycine--tRNA ligase alpha subunit.